Reading from the N-terminus, the 555-residue chain is Urocanate hydratase (555 aa).

NAD(+) contacts are provided by residues 52 to 53 (GG), Gln130, 176 to 178 (GMG), Glu196, Arg201, 242 to 243 (NA), 263 to 267 (QTSAH), 273 to 274 (YL), and Tyr322. Residue Cys410 is part of the active site. Gly492 contacts NAD(+).

The protein belongs to the urocanase family. The cofactor is NAD(+).

It localises to the cytoplasm. It catalyses the reaction 4-imidazolone-5-propanoate = trans-urocanate + H2O. Its pathway is amino-acid degradation; L-histidine degradation into L-glutamate; N-formimidoyl-L-glutamate from L-histidine: step 2/3. Its function is as follows. Catalyzes the conversion of urocanate to 4-imidazolone-5-propionate. This is Urocanate hydratase from Shewanella baltica (strain OS223).